A 162-amino-acid polypeptide reads, in one-letter code: SsrA-binding protein (162 aa).

This sequence belongs to the SmpB family.

It is found in the cytoplasm. Its function is as follows. Required for rescue of stalled ribosomes mediated by trans-translation. Binds to transfer-messenger RNA (tmRNA), required for stable association of tmRNA with ribosomes. tmRNA and SmpB together mimic tRNA shape, replacing the anticodon stem-loop with SmpB. tmRNA is encoded by the ssrA gene; the 2 termini fold to resemble tRNA(Ala) and it encodes a 'tag peptide', a short internal open reading frame. During trans-translation Ala-aminoacylated tmRNA acts like a tRNA, entering the A-site of stalled ribosomes, displacing the stalled mRNA. The ribosome then switches to translate the ORF on the tmRNA; the nascent peptide is terminated with the 'tag peptide' encoded by the tmRNA and targeted for degradation. The ribosome is freed to recommence translation, which seems to be the essential function of trans-translation. The protein is SsrA-binding protein of Shewanella frigidimarina (strain NCIMB 400).